Here is a 151-residue protein sequence, read N- to C-terminus: Small ribosomal subunit protein uS9 (151 aa).

Residues 1–19 (MTETTPAPQTPAAPAGPAQ) are compositionally biased toward low complexity. Disordered regions lie at residues 1-20 (MTET…PAQS) and 121-151 (KAGF…YSKR). The span at 127 to 136 (RDPRATERKK) shows a compositional bias: basic and acidic residues. Residues 137–151 (YGLKKARKAPQYSKR) are compositionally biased toward basic residues.

Belongs to the universal ribosomal protein uS9 family.

In Mycobacterium bovis (strain ATCC BAA-935 / AF2122/97), this protein is Small ribosomal subunit protein uS9 (rpsI).